Reading from the N-terminus, the 192-residue chain is Leucine-rich repeat-containing protein 51 (192 aa).

LRR repeat units follow at residues 49–71 (SLTQ…NQVA), 80–101 (NLAW…LTTF), and 103–124 (NLSV…NKLA). Residues 137–175 (NPMEEEKGYRQYVLCTLSRITTFDFAGVTKADRTTAEVW) form the LRRCT domain.

It is found in the cytoplasm. In Pan troglodytes (Chimpanzee), this protein is Leucine-rich repeat-containing protein 51.